The primary structure comprises 313 residues: Aspartate carbamoyltransferase catalytic subunit (313 aa).

Carbamoyl phosphate-binding residues include R59 and T60. Residue K87 coordinates L-aspartate. Residues R109, H137, and Q140 each contribute to the carbamoyl phosphate site. L-aspartate is bound by residues R170 and R224. Carbamoyl phosphate contacts are provided by G265 and P266.

It belongs to the aspartate/ornithine carbamoyltransferase superfamily. ATCase family. Heterododecamer (2C3:3R2) of six catalytic PyrB chains organized as two trimers (C3), and six regulatory PyrI chains organized as three dimers (R2).

The catalysed reaction is carbamoyl phosphate + L-aspartate = N-carbamoyl-L-aspartate + phosphate + H(+). Its pathway is pyrimidine metabolism; UMP biosynthesis via de novo pathway; (S)-dihydroorotate from bicarbonate: step 2/3. Its function is as follows. Catalyzes the condensation of carbamoyl phosphate and aspartate to form carbamoyl aspartate and inorganic phosphate, the committed step in the de novo pyrimidine nucleotide biosynthesis pathway. This chain is Aspartate carbamoyltransferase catalytic subunit, found in Agrobacterium fabrum (strain C58 / ATCC 33970) (Agrobacterium tumefaciens (strain C58)).